A 189-amino-acid polypeptide reads, in one-letter code: Putative manganese efflux pump MntP (189 aa).

6 helical membrane passes run 3–23, 41–61, 65–85, 104–124, 132–152, and 165–185; these read LSAT…ASIG, LIFG…GLFA, ILEW…CRMI, FWVL…IGVG, IVHT…LGML, and AEII…YEHI.

This sequence belongs to the MntP (TC 9.B.29) family.

Its subcellular location is the cell inner membrane. Probably functions as a manganese efflux pump. This Yersinia enterocolitica serotype O:8 / biotype 1B (strain NCTC 13174 / 8081) protein is Putative manganese efflux pump MntP.